Reading from the N-terminus, the 283-residue chain is Polyamine aminopropyltransferase (283 aa).

The PABS domain maps to 5–238 (PTWIDEYHKG…GIWSWTFASD (234 aa)). S-methyl-5'-thioadenosine is bound at residue Q32. Positions 63 and 87 each coordinate spermidine. S-methyl-5'-thioadenosine-binding positions include E107 and 139-140 (DG). D158 functions as the Proton acceptor in the catalytic mechanism. 158 to 161 (DCSD) lines the spermidine pocket.

Belongs to the spermidine/spermine synthase family. In terms of assembly, homodimer or homotetramer.

The protein localises to the cytoplasm. The enzyme catalyses S-adenosyl 3-(methylsulfanyl)propylamine + putrescine = S-methyl-5'-thioadenosine + spermidine + H(+). It participates in amine and polyamine biosynthesis; spermidine biosynthesis; spermidine from putrescine: step 1/1. Catalyzes the irreversible transfer of a propylamine group from the amino donor S-adenosylmethioninamine (decarboxy-AdoMet) to putrescine (1,4-diaminobutane) to yield spermidine. In Prochlorococcus marinus subsp. pastoris (strain CCMP1986 / NIES-2087 / MED4), this protein is Polyamine aminopropyltransferase.